Here is a 1072-residue protein sequence, read N- to C-terminus: LRR receptor-like serine/threonine-protein kinase RGI5 (1072 aa).

Positions 1–21 (MERERSNFFFLFLFCSWVSMA) are cleaved as a signal peptide. The Extracellular portion of the chain corresponds to 22 to 706 (QPTLSLSSDG…NGVKSPKIVA (685 aa)). A disulfide bridge links cysteine 56 with cysteine 63. LRR repeat units follow at residues 66-89 (DNRV…DLSS), 90-113 (LSSL…SFGK), 114-138 (LTHL…LGRL), 140-162 (TLQF…ISNL), 164-185 (ALQV…SFGS), 187-211 (VSLQ…LGFL), 212-234 (KNLT…TFGN), 235-259 (LVNL…LGLC), 260-283 (SELR…LGKL), 285-307 (KITS…ISNC), 308-331 (SSLV…LGKL), 332-355 (VWLE…LSNC), 356-379 (SSLI…IGNL), 381-402 (SLQS…SFGN), 403-427 (CTDL…LFSL), 429-451 (RLSK…VAKC), 452-475 (QSLV…IGEL), 477-499 (NLVF…ISNI), 500-523 (TVLE…LGNL), 524-546 (VNLE…SFGN), 548-571 (SYLN…IKNL), 572-595 (QKLT…LGQV), 597-619 (SLTI…TFSD), 620-642 (LTQL…VLGS), and 643-667 (LTSL…PFFK). Residues asparagine 80, asparagine 97, and asparagine 102 are each glycosylated (N-linked (GlcNAc...) asparagine). Positions 171 to 172 (QD) match the Small peptide recognition motif. Residue asparagine 176 is glycosylated (N-linked (GlcNAc...) asparagine). Residues 193 to 196 (RLGG) carry the Small peptide recognition motif. An N-linked (GlcNAc...) asparagine glycan is attached at asparagine 213. 3 short sequence motifs (small peptide recognition) span residues 216-221 (TLGFAA), tyrosine 244, and 266-268 (YLH). The N-linked (GlcNAc...) asparagine glycan is linked to asparagine 306. 2 consecutive short sequence motifs (small peptide recognition) follow at residues 314–317 (DVSA) and 336–338 (QLQ). A glycan (N-linked (GlcNAc...) asparagine) is linked at asparagine 354. The short motif at 384–388 (SFFLW) is the Small peptide recognition element. N-linked (GlcNAc...) asparagine glycosylation occurs at asparagine 402. Short sequence motifs (small peptide recognition) lie at residues 410–413 (DLSR), 432–436 (KLLLL), and 456–458 (RLR). Asparagine 498 is a glycosylation site (N-linked (GlcNAc...) asparagine). Asparagine 546 carries N-linked (GlcNAc...) asparagine glycosylation. Asparagine 650 and asparagine 655 each carry an N-linked (GlcNAc...) asparagine glycan. Residues 707–727 (LTAVILASITIAILAAWLLIL) form a helical membrane-spanning segment. Residues 728–1072 (RNNHLYKTSQ…SQPLIKPSSS (345 aa)) lie on the Cytoplasmic side of the membrane. Position 764 is a phosphothreonine (threonine 764). A Protein kinase domain is found at 772 to 1067 (LTDENVIGKG…EWGKTSQPLI (296 aa)). Residues 778–786 (IGKGCSGIV) and lysine 800 contribute to the ATP site. Phosphotyrosine is present on residues tyrosine 851 and tyrosine 887. Aspartate 900 serves as the catalytic Proton acceptor. A Phosphoserine modification is found at serine 936. A phosphotyrosine mark is found at tyrosine 944 and tyrosine 951. Threonine 952 is subject to Phosphothreonine.

The protein belongs to the protein kinase superfamily. Ser/Thr protein kinase family. Binds to RGF1; this interaction triggers the formation of heterodimers with SERK1. Phosphorylated and ubiquitinated upon interaction with RGF1, thus leading to activation a subsequent degradation. In terms of processing, autophosphorylated. In terms of tissue distribution, expressed in roots and hypocotyls.

The protein resides in the membrane. The catalysed reaction is L-seryl-[protein] + ATP = O-phospho-L-seryl-[protein] + ADP + H(+). It carries out the reaction L-threonyl-[protein] + ATP = O-phospho-L-threonyl-[protein] + ADP + H(+). Together with RGI1, RGI2, RGI3 and RGI4, acts as a receptor of RGF1, a peptide hormone that maintains the postembryonic root stem cell niche by regulating the expression levels and patterns of the transcription factor PLETHORA (PLT). Links RGF1 signal with its downstream components. In Arabidopsis thaliana (Mouse-ear cress), this protein is LRR receptor-like serine/threonine-protein kinase RGI5.